We begin with the raw amino-acid sequence, 162 residues long: Superoxide dismutase [Cu-Zn] (162 aa).

Residues 1–20 form the signal peptide; sequence MNKSGIILIGTILFSSMAIA. 3 residues coordinate Cu cation: His66, His68, and His83. Cys73 and Cys158 are disulfide-bonded. 4 residues coordinate Zn(2+): His83, His92, His100, and Asp103. Residue His137 coordinates Cu cation.

It belongs to the Cu-Zn superoxide dismutase family. Homodimer. The cofactor is Cu cation. It depends on Zn(2+) as a cofactor.

Its subcellular location is the periplasm. The enzyme catalyses 2 superoxide + 2 H(+) = H2O2 + O2. Functionally, destroys radicals which are normally produced within the cells and which are toxic to biological systems. This chain is Superoxide dismutase [Cu-Zn] (sodC), found in Legionella pneumophila.